The chain runs to 519 residues: Ribonuclease Y (519 aa).

Residues 3 to 23 form a helical membrane-spanning segment; the sequence is PMTVLISILLTLLGLVVGYYV. The KH domain occupies 209–272; the sequence is TVSVVNLPND…ETARIALDKL (64 aa). One can recognise an HD domain in the interval 335-428; the sequence is VLKHSMEVAF…VAAADALSAA (94 aa).

The protein belongs to the RNase Y family.

It is found in the cell membrane. Endoribonuclease that initiates mRNA decay. The chain is Ribonuclease Y from Bacillus velezensis (strain DSM 23117 / BGSC 10A6 / LMG 26770 / FZB42) (Bacillus amyloliquefaciens subsp. plantarum).